The sequence spans 352 residues: Histidine biosynthesis bifunctional protein HisB (352 aa).

The histidinol-phosphatase stretch occupies residues M1–F164. D9 (nucleophile) is an active-site residue. Residues D9 and D11 each contribute to the Mg(2+) site. The Proton donor role is filled by D11. Zn(2+)-binding residues include C93, H95, C101, and C103. A Mg(2+)-binding site is contributed by D130. The tract at residues R165–I352 is imidazoleglycerol-phosphate dehydratase.

This sequence in the N-terminal section; belongs to the histidinol-phosphatase family. It in the C-terminal section; belongs to the imidazoleglycerol-phosphate dehydratase family. The cofactor is Mg(2+). Zn(2+) serves as cofactor.

It localises to the cytoplasm. It catalyses the reaction D-erythro-1-(imidazol-4-yl)glycerol 3-phosphate = 3-(imidazol-4-yl)-2-oxopropyl phosphate + H2O. The catalysed reaction is L-histidinol phosphate + H2O = L-histidinol + phosphate. The protein operates within amino-acid biosynthesis; L-histidine biosynthesis; L-histidine from 5-phospho-alpha-D-ribose 1-diphosphate: step 6/9. It functions in the pathway amino-acid biosynthesis; L-histidine biosynthesis; L-histidine from 5-phospho-alpha-D-ribose 1-diphosphate: step 8/9. The chain is Histidine biosynthesis bifunctional protein HisB from Campylobacter jejuni subsp. jejuni serotype O:2 (strain ATCC 700819 / NCTC 11168).